Here is a 1192-residue protein sequence, read N- to C-terminus: DNA ligase 1 (1192 aa).

Disordered regions lie at residues 29–257 and 280–517; these read ELNK…KEKE and EKEL…KSTQ. Basic and acidic residues predominate over residues 42–56; the sequence is EAVVKEKVEKKEKKE. Positions 70 to 113 are enriched in acidic residues; that stretch reads EEEEEEQEEQDGEEEQEEEEEYQQQDEEIEEDINGEEEMELDEN. The segment covering 141 to 155 has biased composition (basic and acidic residues); the sequence is KTIENKETKKPEKQS. Residues 172–198 are compositionally biased toward acidic residues; the sequence is DDEEDEEDENKTDDNDLDDMLDDDSDN. 2 stretches are compositionally biased toward basic and acidic residues: residues 199 to 257 and 280 to 368; these read EKDS…KEKE and EKEL…RANA. 2 stretches are compositionally biased toward low complexity: residues 371–382 and 410–434; these read KSSVPTSTSKNS and STTTTTTTTTTSTATTISSKSISSP. Positions 435-467 are enriched in basic and acidic residues; the sequence is SKKEEKEVITSKKQVEATKVEVKKEKEKEKEKE. Residues 468–511 show a composition bias toward acidic residues; sequence KEDDEEEEEEEEDDDEKLEDIDEEEYEEEEEEDEEGISENEEEE. Residues 724 to 733 are interaction with target DNA; that stretch reads KLRIGLAERS. Glu-842 contacts ATP. The active-site N6-AMP-lysine intermediate is the Lys-844. ATP-binding residues include Arg-849 and Arg-865. Residue Glu-897 participates in Mg(2+) binding. Positions 918 to 920 are interaction with target DNA; it reads ARK. Mg(2+) is bound at residue Glu-996. ATP is bound by residues Lys-1001, Arg-1014, and Lys-1020. Positions 1157-1192 are disordered; the sequence is DKSPEDATSSDQVVDMYQNQKINSQSSKINEKDEDY. Positions 1162–1184 are enriched in polar residues; that stretch reads DATSSDQVVDMYQNQKINSQSSK.

This sequence belongs to the ATP-dependent DNA ligase family. Requires Mg(2+) as cofactor.

It is found in the nucleus. It catalyses the reaction ATP + (deoxyribonucleotide)n-3'-hydroxyl + 5'-phospho-(deoxyribonucleotide)m = (deoxyribonucleotide)n+m + AMP + diphosphate.. In terms of biological role, DNA ligase that seals nicks in double-stranded DNA during DNA replication, DNA recombination and DNA repair. This chain is DNA ligase 1 (lig1), found in Dictyostelium discoideum (Social amoeba).